Reading from the N-terminus, the 365-residue chain is Chorismate synthase (365 aa).

2 residues coordinate NADP(+): arginine 48 and arginine 54. FMN is bound by residues 131 to 133, 243 to 244, glycine 288, 303 to 307, and arginine 329; these read RSS, NA, and KPTSS.

It belongs to the chorismate synthase family. Homotetramer. Requires FMNH2 as cofactor.

The catalysed reaction is 5-O-(1-carboxyvinyl)-3-phosphoshikimate = chorismate + phosphate. Its pathway is metabolic intermediate biosynthesis; chorismate biosynthesis; chorismate from D-erythrose 4-phosphate and phosphoenolpyruvate: step 7/7. Functionally, catalyzes the anti-1,4-elimination of the C-3 phosphate and the C-6 proR hydrogen from 5-enolpyruvylshikimate-3-phosphate (EPSP) to yield chorismate, which is the branch point compound that serves as the starting substrate for the three terminal pathways of aromatic amino acid biosynthesis. This reaction introduces a second double bond into the aromatic ring system. This is Chorismate synthase from Agrobacterium fabrum (strain C58 / ATCC 33970) (Agrobacterium tumefaciens (strain C58)).